We begin with the raw amino-acid sequence, 1064 residues long: Serine protease inhibitor Kazal-type 5 (1064 aa).

A signal peptide spans 1 to 22; it reads MKIATVSVLLPLALCLIQDAAS. The Kazal-like 1; atypical domain maps to 28 to 66; it reads EMCHEFQAFMKNGKLFCPQDKKFFQSLDGIMFINKCATC. 21 disulfide bridges follow: Cys30–Cys66, Cys44–Cys63, Cys97–Cys133, Cys111–Cys130, Cys119–Cys151, Cys161–Cys197, Cys175–Cys194, Cys225–Cys261, Cys239–Cys258, Cys297–Cys333, Cys311–Cys330, Cys367–Cys403, Cys381–Cys400, Cys437–Cys473, Cys451–Cys470, Cys496–Cys532, Cys510–Cys529, Cys567–Cys603, Cys581–Cys600, Cys632–Cys668, and Cys646–Cys665. 14 consecutive Kazal-like domains span residues 91 to 153, 155 to 216, 219 to 285, 291 to 352, 361 to 423, 431 to 489, 490 to 551, 561 to 622, 626 to 688, 701 to 757, 768 to 830, 843 to 905, 910 to 971, and 987 to 1048; these read APTE…ECKS, NPEQ…ETRI, NAEK…KAEE, REIV…ARAR, TSYA…KSRN, ASFE…KAKR, EAAK…EEKG, EAVQ…PRAK, EAEK…EDQR, GNTQ…KNEY, ESGK…EDRS, NDKE…EKSS, NNAK…EKPS, and SLDS…KCEE. Residues 676–688 show a composition bias toward basic and acidic residues; it reads NEERKRKEEEDQR. Residues 676–705 form a disordered region; sequence NEERKRKEEEDQRNAAGHGSSGGGGGNTQD. Intrachain disulfides connect Cys707–Cys743, Cys721–Cys740, Cys774–Cys810, Cys788–Cys807, Cys849–Cys885, and Cys863–Cys882. Residues 751–775 are disordered; sequence AERKNEYSRSRSNGTGSESGKDTCD. The interval 818 to 849 is disordered; it reads AAEKKKKEDEDRSNTGERSNTGERSNDKEDLC. Basic and acidic residues predominate over residues 895–905; it reads ERKKKDEEKSS. The interval 895–915 is disordered; sequence ERKKKDEEKSSSKPSNNAKDE. Intrachain disulfides connect Cys916–Cys952 and Cys930–Cys949. Positions 967–977 are enriched in basic and acidic residues; the sequence is QEKPSHVRASQ. Residues 967–987 form a disordered region; the sequence is QEKPSHVRASQEEDSPDSFSS. Disulfide bonds link Cys993–Cys1028, Cys1006–Cys1025, and Cys1014–Cys1046. Residues 1041 to 1064 are disordered; it reads RSTGKCEESSTPGTTAASMPPSDE.

Post-translationally, proteolytically processed by furin in individual domains (D1, D5, D6, D8 through D11, and D9 through D15) exhibiting various inhibitory potentials for multiple proteases. Highly expressed in the thymus and stratum corneum. Also found in the oral mucosa, parathyroid gland, Bartholin's glands, tonsils, and vaginal epithelium. Very low levels are detected in lung, kidney, and prostate.

The protein resides in the secreted. Serine protease inhibitor, probably important for the anti-inflammatory and/or antimicrobial protection of mucous epithelia. Contribute to the integrity and protective barrier function of the skin by regulating the activity of defense-activating and desquamation-involved proteases. Inhibits KLK5, it's major target, in a pH-dependent manner. Inhibits KLK7, KLK14 CASP14, and trypsin. The protein is Serine protease inhibitor Kazal-type 5 (SPINK5) of Homo sapiens (Human).